Here is a 71-residue protein sequence, read N- to C-terminus: Sec-independent protein translocase protein TatA (71 aa).

A helical transmembrane segment spans residues 1-21 (MGSFSIWHWLIVLVIVALIFG). Residues 48-71 (ADKTEQVTQQQTTIDVQAKEKQNS) are disordered.

The protein belongs to the TatA/E family. The Tat system comprises two distinct complexes: a TatABC complex, containing multiple copies of TatA, TatB and TatC subunits, and a separate TatA complex, containing only TatA subunits. Substrates initially bind to the TatABC complex, which probably triggers association of the separate TatA complex to form the active translocon.

Its subcellular location is the cell inner membrane. Its function is as follows. Part of the twin-arginine translocation (Tat) system that transports large folded proteins containing a characteristic twin-arginine motif in their signal peptide across membranes. TatA could form the protein-conducting channel of the Tat system. The chain is Sec-independent protein translocase protein TatA from Bordetella avium (strain 197N).